Here is a 628-residue protein sequence, read N- to C-terminus: DNA mismatch repair protein MutL (628 aa).

The disordered stretch occupies residues 334–367; sequence SDFAQPSADNMPKPESPGAPAAHGRKDDAPAAHA. Positions 357–367 are enriched in basic and acidic residues; it reads GRKDDAPAAHA.

This sequence belongs to the DNA mismatch repair MutL/HexB family.

Functionally, this protein is involved in the repair of mismatches in DNA. It is required for dam-dependent methyl-directed DNA mismatch repair. May act as a 'molecular matchmaker', a protein that promotes the formation of a stable complex between two or more DNA-binding proteins in an ATP-dependent manner without itself being part of a final effector complex. In Opitutus terrae (strain DSM 11246 / JCM 15787 / PB90-1), this protein is DNA mismatch repair protein MutL.